The sequence spans 722 residues: Protein Aster-A (722 aa).

A disordered region spans residues 1–62 (MFDTTPHSGR…KSGVSGTLST (62 aa)). The span at 8-18 (SGRSSPSSSPS) shows a compositional bias: low complexity. The GRAM domain maps to 93–160 (EDFRKLFSKL…KEVTCLKKEK (68 aa)). Residues 256–336 (ISPSGAADHS…DGPTSSLGPL (81 aa)) form a disordered region. 4 positions are modified to phosphoserine: Ser-265, Ser-269, Ser-273, and Ser-417. The region spanning 369–540 (SGRLLINSVF…ELAKAEKLSL (172 aa)) is the VASt domain. A disordered region spans residues 561–600 (LSWRGHRDGPQHPDPDPCTQTSMHTSGSLSSRFSEPSVDQ). Residues 565-575 (GHRDGPQHPDP) show a composition bias toward basic and acidic residues. A compositionally biased stretch (polar residues) spans 578-594 (CTQTSMHTSGSLSSRFS). Residues 609–629 (ALVLISIVLIVLIALNALLFY) traverse the membrane as a helical segment.

Highly expressed in the brain.

It localises to the endoplasmic reticulum membrane. Its subcellular location is the cell membrane. The protein resides in the cytoplasmic vesicle. It is found in the autophagosome. Functionally, cholesterol transporter that mediates non-vesicular transport of cholesterol from the plasma membrane (PM) to the endoplasmic reticulum (ER). Contains unique domains for binding cholesterol and the PM, thereby serving as a molecular bridge for the transfer of cholesterol from the PM to the ER. Plays a crucial role in cholesterol homeostasis and has the unique ability to localize to the PM based on the level of membrane cholesterol. In lipid-poor conditions localizes to the ER membrane and in response to excess cholesterol in the PM is recruited to the endoplasmic reticulum-plasma membrane contact sites (EPCS) which is mediated by the GRAM domain. At the EPCS, the sterol-binding VASt/ASTER domain binds to the cholesterol in the PM and facilitates its transfer from the PM to ER. May play a role in tumor progression. Plays a role in autophagy regulation and is required for biogenesis of the autophagosome. This function in autophagy requires its cholesterol-transfer activity. The protein is Protein Aster-A of Mus musculus (Mouse).